An 81-amino-acid polypeptide reads, in one-letter code: Protein RADIALIS-like 3 (81 aa).

In terms of domain architecture, SANT spans 7-62 (SSSASWTRKENKLFERALATYDQDTPDRWHNVARAVGGKSAEEVRRHYELLIRDVN).

In terms of tissue distribution, expressed just outside the vascular bundles in the rosette stem and the leaf traces. Not detected in floral primordia.

The protein resides in the nucleus. Probable transcription factor. This chain is Protein RADIALIS-like 3 (RL3), found in Arabidopsis thaliana (Mouse-ear cress).